A 157-amino-acid polypeptide reads, in one-letter code: Class-10 pathogenesis-related protein 1 (157 aa).

Belongs to the BetVI family. In terms of tissue distribution, high levels in roots and not detectable in hypocotyls, cotyledons, stems, leaves and flower buds of untreated plants. After induction, high levels are present in the vascular bundles of leaves.

The protein localises to the cytoplasm. The polypeptide is Class-10 pathogenesis-related protein 1 (MSPR10-1) (Medicago sativa (Alfalfa)).